Reading from the N-terminus, the 375-residue chain is Carbamoyl phosphate synthase small chain (375 aa).

Residues 1 to 186 form a CPSase region; the sequence is MKAILALEDG…IVDGTYAWPG (186 aa). L-glutamine is bound by residues S45, G238, and G240. Residues 190-375 form the Glutamine amidotransferase type-1 domain; that stretch reads RLVVFDMGIK…RNLVRKETGK (186 aa). Residue C265 is the Nucleophile of the active site. 5 residues coordinate L-glutamine: L266, Q269, N307, G309, and F310. Active-site residues include H348 and E350.

The protein belongs to the CarA family. Composed of two chains; the small (or glutamine) chain promotes the hydrolysis of glutamine to ammonia, which is used by the large (or ammonia) chain to synthesize carbamoyl phosphate. Tetramer of heterodimers (alpha,beta)4.

It carries out the reaction hydrogencarbonate + L-glutamine + 2 ATP + H2O = carbamoyl phosphate + L-glutamate + 2 ADP + phosphate + 2 H(+). The enzyme catalyses L-glutamine + H2O = L-glutamate + NH4(+). The protein operates within amino-acid biosynthesis; L-arginine biosynthesis; carbamoyl phosphate from bicarbonate: step 1/1. It functions in the pathway pyrimidine metabolism; UMP biosynthesis via de novo pathway; (S)-dihydroorotate from bicarbonate: step 1/3. Its function is as follows. Small subunit of the glutamine-dependent carbamoyl phosphate synthetase (CPSase). CPSase catalyzes the formation of carbamoyl phosphate from the ammonia moiety of glutamine, carbonate, and phosphate donated by ATP, constituting the first step of 2 biosynthetic pathways, one leading to arginine and/or urea and the other to pyrimidine nucleotides. The small subunit (glutamine amidotransferase) binds and cleaves glutamine to supply the large subunit with the substrate ammonia. This chain is Carbamoyl phosphate synthase small chain, found in Solidesulfovibrio magneticus (strain ATCC 700980 / DSM 13731 / RS-1) (Desulfovibrio magneticus).